A 1650-amino-acid polypeptide reads, in one-letter code: Phosphatidylinositol 3,4,5-trisphosphate-dependent Rac exchanger 1 protein (1650 aa).

A compositionally biased stretch (gly residues) spans 1–19; sequence MEAPGSGGGDGGGDPGGDG. The interval 1-33 is disordered; it reads MEAPGSGGGDGGGDPGGDGAHPDARGPVSGPCA. The 192-residue stretch at 44-235 folds into the DH domain; sequence LRLCVLNEIL…KTVCSNINET (192 aa). The PH domain occupies 266-387; the sequence is ELLLQGNLLK…WLDALIRERE (122 aa). A Phosphoserine modification is found at S314. DEP domains are found at residues 416-491 and 518-592; these read MSKK…RFRY and SLYA…RFHA. The region spanning 620–698 is the PDZ domain; the sequence is RLLIPPQEDD…SRRPLRLLVA (79 aa). A disordered region spans residues 793 to 813; it reads ARASQGAPDEDPQEDDQPDSA. Positions 800–810 are enriched in acidic residues; that stretch reads PDEDPQEDDQP. S991 bears the Phosphoserine mark. Disordered stretches follow at residues 1022 to 1047 and 1099 to 1129; these read SPAV…GAPS and PTSA…EVDR. Residues 1030-1047 are compositionally biased toward polar residues; that stretch reads QGQGLNDSSYGSASGAPS. Residues 1109 to 1122 show a composition bias toward low complexity; sequence PSLVEETSSSPPVS. S1186 and S1191 each carry phosphoserine.

As to quaternary structure, interacts preferentially with RAC2. Interacts with RAC1. Interacts with AUTS2.

It localises to the cytoplasm. The protein localises to the cytosol. Its subcellular location is the cell membrane. In terms of biological role, functions as a RAC guanine nucleotide exchange factor (GEF), which activates the Rac proteins by exchanging bound GDP for free GTP. Its activity is synergistically activated by phosphatidylinositol 3,4,5-trisphosphate and the beta gamma subunits of heterotrimeric G protein. May function downstream of heterotrimeric G proteins in neutrophils. This Mus musculus (Mouse) protein is Phosphatidylinositol 3,4,5-trisphosphate-dependent Rac exchanger 1 protein (Prex1).